A 139-amino-acid polypeptide reads, in one-letter code: Large ribosomal subunit protein uL16 (139 aa).

The protein belongs to the universal ribosomal protein uL16 family. As to quaternary structure, part of the 50S ribosomal subunit.

In terms of biological role, binds 23S rRNA and is also seen to make contacts with the A and possibly P site tRNAs. The polypeptide is Large ribosomal subunit protein uL16 (Chlorobium phaeobacteroides (strain DSM 266 / SMG 266 / 2430)).